The primary structure comprises 275 residues: Autophagy protein 5 (275 aa).

Methionine 1 is modified (N-acetylmethionine). Lysine 130 participates in a covalent cross-link: Glycyl lysine isopeptide (Lys-Gly) (interchain with G-Cter in ATG12).

This sequence belongs to the ATG5 family. In terms of assembly, forms a conjugate with ATG12. Part of the minor complex composed of 4 sets of ATG12-ATG5 and ATG16L1 (400 kDa); this complex interacts with ATG3 leading to disruption of ATG7 interaction and promotion of ATG8-like proteins lipidation. Forms an 800-kDa complex composed of ATG12-ATG5 and ATG16L2. The ATG12-ATG5 conjugate interacts with RAB33A; this interaction is bridged by ATG16L1 and promotes ATG12-ATG5-ATG16L1 complex recruitment to phagophores. Interacts with TECPR1; the interaction is direct and does not take place when ATG16L1 is associated with the ATG5-ATG12 conjugate. Interacts with DHX58/RIG-1, IFIH1/MDA5 and MAVS/IPS-1 in monomeric form as well as in ATG12-ATG5 conjugate form. The interaction with MAVS is further enhanced upon vesicular stomatitis virus (VSV) infection. Interacts with ATG3. Interacts with ATG7 and ATG10. Interacts with FADD. Interacts with Bassoon/BSN; this interaction is important for the regulation of presynaptic autophagy. Interacts with ATG16L2. In terms of processing, conjugated to ATG12; which is essential for autophagy, but is not required for association with isolation membrane. Acetylated by EP300.

Its subcellular location is the cytoplasm. The protein resides in the preautophagosomal structure membrane. In terms of biological role, involved in autophagic vesicle formation. Conjugation with ATG12, through a ubiquitin-like conjugating system involving ATG7 as an E1-like activating enzyme and ATG10 as an E2-like conjugating enzyme, is essential for its function. The ATG12-ATG5 conjugate acts as an E3-like enzyme which is required for lipidation of ATG8 family proteins and their association to the vesicle membranes. Involved in mitochondrial quality control after oxidative damage, and in subsequent cellular longevity. Plays a critical role in multiple aspects of lymphocyte development and is essential for both B and T lymphocyte survival and proliferation. Required for optimal processing and presentation of antigens for MHC II. Involved in the maintenance of axon morphology and membrane structures, as well as in normal adipocyte differentiation. Promotes primary ciliogenesis through removal of OFD1 from centriolar satellites and degradation of IFT20 via the autophagic pathway. As part of the ATG8 conjugation system with ATG12 and ATG16L1, required for recruitment of LRRK2 to stressed lysosomes and induction of LRRK2 kinase activity in response to lysosomal stress. Functionally, may play an important role in the apoptotic process, possibly within the modified cytoskeleton. Its expression is a relatively late event in the apoptotic process, occurring downstream of caspase activity. Plays a crucial role in IFN-gamma-induced autophagic cell death by interacting with FADD. The chain is Autophagy protein 5 from Sus scrofa (Pig).